Here is a 218-residue protein sequence, read N- to C-terminus: Adenylate kinase (218 aa).

10–15 (GAGKGT) is an ATP binding site. Residues 30–59 (STGDMLRAAVKAGTPLGLQAKAVMDSGSLV) form an NMP region. AMP is bound by residues threonine 31, arginine 36, 57-59 (SLV), 85-88 (GFPR), and glutamine 92. The tract at residues 122 to 159 (GRRSHPASGRTYHVRFNPPKIDGKDDLTGEALLQREDD) is LID. ATP-binding positions include arginine 123 and 132–133 (TY). 2 residues coordinate AMP: arginine 156 and arginine 167. Residue glycine 203 coordinates ATP.

It belongs to the adenylate kinase family. In terms of assembly, monomer.

It localises to the cytoplasm. The catalysed reaction is AMP + ATP = 2 ADP. It participates in purine metabolism; AMP biosynthesis via salvage pathway; AMP from ADP: step 1/1. Catalyzes the reversible transfer of the terminal phosphate group between ATP and AMP. Plays an important role in cellular energy homeostasis and in adenine nucleotide metabolism. This chain is Adenylate kinase, found in Verminephrobacter eiseniae (strain EF01-2).